The sequence spans 283 residues: Pantothenate synthetase 1 (283 aa).

30-37 contacts ATP; the sequence is MGYLHDGH. H37 serves as the catalytic Proton donor. Q61 lines the (R)-pantoate pocket. Position 61 (Q61) interacts with beta-alanine. Position 147–150 (147–150) interacts with ATP; it reads GQKD. Q153 provides a ligand contact to (R)-pantoate. Residues V176 and 184–187 each bind ATP; that span reads MSSR.

Belongs to the pantothenate synthetase family. As to quaternary structure, homodimer.

Its subcellular location is the cytoplasm. It carries out the reaction (R)-pantoate + beta-alanine + ATP = (R)-pantothenate + AMP + diphosphate + H(+). Its pathway is cofactor biosynthesis; (R)-pantothenate biosynthesis; (R)-pantothenate from (R)-pantoate and beta-alanine: step 1/1. Catalyzes the condensation of pantoate with beta-alanine in an ATP-dependent reaction via a pantoyl-adenylate intermediate. This chain is Pantothenate synthetase 1, found in Bradyrhizobium diazoefficiens (strain JCM 10833 / BCRC 13528 / IAM 13628 / NBRC 14792 / USDA 110).